The primary structure comprises 212 residues: HTH-type transcriptional regulator RutR (212 aa).

The HTH tetR-type domain occupies 17-77 (SAKKKAILSA…AVLRQILDIW (61 aa)). The segment at residues 39-58 (TRLEQIAELAGVSKTNLLYY) is a DNA-binding region (H-T-H motif).

In terms of assembly, homodimer.

Master transcription regulator which represses the degradation of pyrimidines (rutABCDEFG) and purines (gcl operon) for maintenance of metabolic balance between pyrimidines and purines. It also regulates the synthesis of pyrimidine nucleotides and arginine from glutamine (carAB) and the supply of glutamate (gadABWX). In Escherichia coli O6:H1 (strain CFT073 / ATCC 700928 / UPEC), this protein is HTH-type transcriptional regulator RutR (rutR).